We begin with the raw amino-acid sequence, 663 residues long: Terreic acid cluster-specific transcription factor atF (663 aa).

Residues 1 to 20 (MFATFNSSMDNRSSANSPVA) are compositionally biased toward polar residues. 2 disordered regions span residues 1-28 (MFATFNSSMDNRSSANSPVAPSSRPKRT) and 55-126 (TRGV…SPSQ). A DNA-binding region (zn(2)-C6 fungal-type) is located at residues 34 to 60 (CDWCRLNRVKCDDGQPCKNCRTRGVRC). Residues 55-64 (TRGVRCRKGS) are compositionally biased toward basic residues. Low complexity-rich tracts occupy residues 73 to 88 (SSSAAASERARSQGAQ) and 105 to 125 (ATTSRRNSRTPSSSPSSPSPS).

It localises to the nucleus. Transcription factor that regulates the expression of the gene cluster that mediates the biosynthesis of terreic acid, a quinone epoxide inhibitor of Bruton's tyrosine kinase. In Aspergillus terreus (strain NIH 2624 / FGSC A1156), this protein is Terreic acid cluster-specific transcription factor atF.